A 189-amino-acid chain; its full sequence is Elongation factor P (189 aa).

The protein belongs to the elongation factor P family.

The protein localises to the cytoplasm. The protein operates within protein biosynthesis; polypeptide chain elongation. Involved in peptide bond synthesis. Stimulates efficient translation and peptide-bond synthesis on native or reconstituted 70S ribosomes in vitro. Probably functions indirectly by altering the affinity of the ribosome for aminoacyl-tRNA, thus increasing their reactivity as acceptors for peptidyl transferase. This chain is Elongation factor P, found in Chloroflexus aurantiacus (strain ATCC 29364 / DSM 637 / Y-400-fl).